The primary structure comprises 319 residues: G-protein coupled receptor 171 (319 aa).

Over 1 to 21 the chain is Extracellular; that stretch reads MTNSSTFCPVYRDLEPFTYFF. N-linked (GlcNAc...) asparagine glycosylation occurs at Asn-3. The helical transmembrane segment at 22–42 threads the bilayer; the sequence is YLVFLIGIIGSCFATWAFIQK. The Cytoplasmic portion of the chain corresponds to 43–48; sequence TTNHRC. Residues 49-69 form a helical membrane-spanning segment; sequence VSIYLINLLTADFLLTLALPV. Over 70-89 the chain is Extracellular; sequence KIIVDLGVAPWKLRIFHCQV. A helical membrane pass occupies residues 90–110; the sequence is TACLIYINMYLSIIFLAFVSI. At 111 to 132 the chain is on the cytoplasmic side; sequence DRCLQLIHSCKIYRIQEPGFAK. Residues 133-153 form a helical membrane-spanning segment; sequence MISAVVWLMVLLIMVPNMVIP. Residues 154–181 are Extracellular-facing; that stretch reads IKDIKEKSNVGCMEFKKEFGRNWHLLTN. The helical transmembrane segment at 182 to 202 threads the bilayer; sequence FICVAIFLNFSVIILISNFLA. Over 203–224 the chain is Cytoplasmic; the sequence is IRQLYRNRDNTNYPSVKSALLH. The chain crosses the membrane as a helical span at residues 225–245; sequence ILLVTASYIICFVPYHAVRIP. The Extracellular segment spans residues 246–268; sequence YTLSQTEVISDCSTRIALFKAKE. A helical membrane pass occupies residues 269–289; sequence ATLLLAVSNLCFDPILYYHLS. At 290–319 the chain is on the cytoplasmic side; it reads KAFRLKVTETFASPKKSKPLEERLRSENDV.

This sequence belongs to the G-protein coupled receptor 1 family. In terms of tissue distribution, highly expressed in hypothalamus, including the arcuate nucleus, paraventricular nucleus and dorsomedial hypothalamus. Expressed in periaqueductal gray (at protein level), found primarily in GABAergic neurons and to a lesser extent in glutamatergic neurons. Expressed in T cells and natural killer cells.

The protein localises to the cell membrane. In terms of biological role, G-protein coupled receptor for Big LEN, a 16-amino acid neuropeptide produced from the precursor protein, proSAAS (encoded by PCSK1N). Acts through a G(i)-alpha-mediated pathway in response to Big LEN. Big LEN-GPR171 system plays an important role in regulating feeding and metabolism. Also plays a role in modulating fear and anxiety-like behaviors in the basolateral amygdala. Big LEN-GPR171 modulates the mu-type opioid receptor signaling and antinociception. Acts as a negative regulator T cell function. In Mus musculus (Mouse), this protein is G-protein coupled receptor 171 (Gpr171).